Reading from the N-terminus, the 180-residue chain is ATP synthase subunit delta (180 aa).

Belongs to the ATPase delta chain family. In terms of assembly, F-type ATPases have 2 components, F(1) - the catalytic core - and F(0) - the membrane proton channel. F(1) has five subunits: alpha(3), beta(3), gamma(1), delta(1), epsilon(1). F(0) has three main subunits: a(1), b(2) and c(10-14). The alpha and beta chains form an alternating ring which encloses part of the gamma chain. F(1) is attached to F(0) by a central stalk formed by the gamma and epsilon chains, while a peripheral stalk is formed by the delta and b chains.

Its subcellular location is the cell membrane. Functionally, f(1)F(0) ATP synthase produces ATP from ADP in the presence of a proton or sodium gradient. F-type ATPases consist of two structural domains, F(1) containing the extramembraneous catalytic core and F(0) containing the membrane proton channel, linked together by a central stalk and a peripheral stalk. During catalysis, ATP synthesis in the catalytic domain of F(1) is coupled via a rotary mechanism of the central stalk subunits to proton translocation. This protein is part of the stalk that links CF(0) to CF(1). It either transmits conformational changes from CF(0) to CF(1) or is implicated in proton conduction. In Pediococcus pentosaceus (strain ATCC 25745 / CCUG 21536 / LMG 10740 / 183-1w), this protein is ATP synthase subunit delta.